Reading from the N-terminus, the 298-residue chain is Probable endonuclease 4 (298 aa).

Zn(2+) contacts are provided by His69, His111, Glu146, Asp180, His183, His215, Asp228, His230, and Glu260.

It belongs to the AP endonuclease 2 family. Zn(2+) serves as cofactor.

The catalysed reaction is Endonucleolytic cleavage to 5'-phosphooligonucleotide end-products.. In terms of biological role, endonuclease IV plays a role in DNA repair. It cleaves phosphodiester bonds at apurinic or apyrimidinic (AP) sites, generating a 3'-hydroxyl group and a 5'-terminal sugar phosphate. This chain is Probable endonuclease 4, found in Bacillus cereus (strain AH187).